The following is a 398-amino-acid chain: Cysteine desulfurase (398 aa).

Pyridoxal 5'-phosphate-binding positions include 74-75 (GT), Asn155, Gln182, and 202-204 (CGH). Lys205 is subject to N6-(pyridoxal phosphate)lysine. Over residues 230-244 (GHQERSRRAGNGERA) the composition is skewed to basic and acidic residues. Residues 230-253 (GHQERSRRAGNGERAGHRRAGGGA) form a disordered region. The Cysteine persulfide intermediate role is filled by Cys327. Residue Cys327 participates in [2Fe-2S] cluster binding.

This sequence belongs to the class-V pyridoxal-phosphate-dependent aminotransferase family. NifS/IscS subfamily. Homodimer. Pyridoxal 5'-phosphate serves as cofactor.

It carries out the reaction (sulfur carrier)-H + L-cysteine = (sulfur carrier)-SH + L-alanine. In terms of biological role, catalyzes the removal of elemental sulfur atoms from cysteine to produce alanine. Seems to participate in the biosynthesis of the nitrogenase metalloclusters by providing the inorganic sulfur required for the Fe-S core formation. The chain is Cysteine desulfurase from Azospirillum brasilense.